The chain runs to 250 residues: Imidazole glycerol phosphate synthase subunit HisF (250 aa).

Catalysis depends on residues Asp-11 and Asp-130.

Belongs to the HisA/HisF family. In terms of assembly, heterodimer of HisH and HisF.

It is found in the cytoplasm. The enzyme catalyses 5-[(5-phospho-1-deoxy-D-ribulos-1-ylimino)methylamino]-1-(5-phospho-beta-D-ribosyl)imidazole-4-carboxamide + L-glutamine = D-erythro-1-(imidazol-4-yl)glycerol 3-phosphate + 5-amino-1-(5-phospho-beta-D-ribosyl)imidazole-4-carboxamide + L-glutamate + H(+). It participates in amino-acid biosynthesis; L-histidine biosynthesis; L-histidine from 5-phospho-alpha-D-ribose 1-diphosphate: step 5/9. Its function is as follows. IGPS catalyzes the conversion of PRFAR and glutamine to IGP, AICAR and glutamate. The HisF subunit catalyzes the cyclization activity that produces IGP and AICAR from PRFAR using the ammonia provided by the HisH subunit. In Elusimicrobium minutum (strain Pei191), this protein is Imidazole glycerol phosphate synthase subunit HisF.